A 397-amino-acid chain; its full sequence is Mannonate dehydratase (397 aa).

The protein belongs to the mannonate dehydratase family. It depends on Fe(2+) as a cofactor. Mn(2+) serves as cofactor.

It catalyses the reaction D-mannonate = 2-dehydro-3-deoxy-D-gluconate + H2O. It participates in carbohydrate metabolism; pentose and glucuronate interconversion. Its function is as follows. Catalyzes the dehydration of D-mannonate. This is Mannonate dehydratase from Yersinia pestis bv. Antiqua (strain Antiqua).